The sequence spans 367 residues: Carbamoyl phosphate synthase small chain (367 aa).

Residues 1 to 182 (MKLENKKGYL…PIFHPNTGDM (182 aa)) form a CPSase region. Positions 50, 230, and 232 each coordinate L-glutamine. The region spanning 182–367 (MIVVVDCGIK…DKFRTMVTGK (186 aa)) is the Glutamine amidotransferase type-1 domain. The active-site Nucleophile is the Cys-258. Residues Leu-259, Gln-262, Asn-300, Gly-302, and Tyr-303 each coordinate L-glutamine. Catalysis depends on residues His-343 and Glu-345.

It belongs to the CarA family. As to quaternary structure, composed of two chains; the small (or glutamine) chain promotes the hydrolysis of glutamine to ammonia, which is used by the large (or ammonia) chain to synthesize carbamoyl phosphate. Tetramer of heterodimers (alpha,beta)4.

It carries out the reaction hydrogencarbonate + L-glutamine + 2 ATP + H2O = carbamoyl phosphate + L-glutamate + 2 ADP + phosphate + 2 H(+). The catalysed reaction is L-glutamine + H2O = L-glutamate + NH4(+). It participates in amino-acid biosynthesis; L-arginine biosynthesis; carbamoyl phosphate from bicarbonate: step 1/1. It functions in the pathway pyrimidine metabolism; UMP biosynthesis via de novo pathway; (S)-dihydroorotate from bicarbonate: step 1/3. Small subunit of the glutamine-dependent carbamoyl phosphate synthetase (CPSase). CPSase catalyzes the formation of carbamoyl phosphate from the ammonia moiety of glutamine, carbonate, and phosphate donated by ATP, constituting the first step of 2 biosynthetic pathways, one leading to arginine and/or urea and the other to pyrimidine nucleotides. The small subunit (glutamine amidotransferase) binds and cleaves glutamine to supply the large subunit with the substrate ammonia. In Saccharolobus solfataricus (strain ATCC 35092 / DSM 1617 / JCM 11322 / P2) (Sulfolobus solfataricus), this protein is Carbamoyl phosphate synthase small chain.